The primary structure comprises 837 residues: Outer membrane usher protein PsaC (837 aa).

A signal peptide spans 1–23 (MKKLIVQFTTITLLMSTSFLVGA).

This sequence belongs to the fimbrial export usher family.

It localises to the cell outer membrane. Involved in the export and assembly of PsaA (pH 6) fimbrial subunits across the outer membrane. This Yersinia pestis protein is Outer membrane usher protein PsaC (psaC).